The primary structure comprises 518 residues: MLCASFLGLGLSVAIVGPTFQDLATNVNRNISSLSFIFVGRALGYLSGSVIGGFLVDVMNYFLLLGISMSATTVGLYLVPFCKTAILLTVMMSIFGVSIGILDTGGNVLILAIWGDKGAPHMQALHFSFALGAFLAPLLAKLALGPTASAENHTESDFHPALNQSSDADSEALFGVPNDKNLLWAYAVIGTYMFLVSVIFFCLFLKNSSKQEKARASAETFRRAKYHNALLCLLFLFFFFYVGAEVTYGSYVFSFATTHAGMKESEAAGLNSIFWGTFAACRGLAIFFATCLQPGTMIVLSNIGSLTSSLFLVLFDKNPICLWIATSVYGASMATTFPSGVSWIEQYTTIHGKSAAFFVIGASLGEMAIPAVIGILQGKYPDLPVVLYTSLGASIATGILFPVLYKLATSPLDRQRKEDRKSEDQKALLSSSGLNEYEEENEEEDAEKWNEMDFEMIETNDTMRHSIIETSRSSLTEPTAEVYNQYPSNALVFESSPFNTGSAHVKHLPETRTKGTNV.

12 consecutive transmembrane segments (helical) span residues 19-39 (TFQDLATNVNRNISSLSFIFV), 53-73 (GFLVDVMNYFLLLGISMSATT), 82-102 (CKTAILLTVMMSIFGVSIGIL), 107-127 (NVLILAIWGDKGAPHMQALHF), 139-159 (LAKLALGPTASAENHTESDFH), 221-241 (FRRAKYHNALLCLLFLFFFFY), 307-327 (TSSLFLVLFDKNPICLWIATS), 347-367 (YTTIHGKSAAFFVIGASLGEM), 376-396 (LQGKYPDLPVVLYTSLGASIA), 400-420 (LFPVLYKLATSPLDRQRKEDR), 438-458 (EEENEEEDAEKWNEMDFEMIE), and 466-486 (SIIETSRSSLTEPTAEVYNQY). A compositionally biased stretch (basic and acidic residues) spans 414–426 (RQRKEDRKSEDQK). Positions 414–448 (RQRKEDRKSEDQKALLSSSGLNEYEEENEEEDAEK) are disordered. A compositionally biased stretch (acidic residues) spans 436–448 (EYEEENEEEDAEK).

The protein belongs to the major facilitator superfamily.

The protein resides in the apical cell membrane. Functionally, may function as a sodium-dependent glucose transporter. Potential channels for urea in the inner medulla of kidney. The sequence is that of Sodium-dependent glucose transporter 1 from Homo sapiens (Human).